Here is a 1194-residue protein sequence, read N- to C-terminus: Peroxisomal ATPase PEX1 (1194 aa).

The segment at 220 to 255 (KTRQRRMSHQGKSVKAKSLASTRHGKRRDDGSGPSG) is disordered. The span at 221–234 (TRQRRMSHQGKSVK) shows a compositional bias: basic residues. The tract at residues 538–730 (RSASVLLTGA…GPEPTLKIEK (193 aa)) is AAA-cassette D1. ATP-binding positions include 546–553 (GARGSGKT) and 849–856 (GYPGCGKT). Positions 844 to 1028 (GLLLYGYPGC…LYNAHLEAIH (185 aa)) are AAA-cassette D2. Disordered stretches follow at residues 1062–1084 (YISF…LTNG), 1116–1139 (QVQQ…EPVI), and 1174–1194 (RSGE…SSLM). Over residues 1066–1084 (SMGNKDSTGEPSTQPLTNG) the composition is skewed to polar residues. A compositionally biased stretch (low complexity) spans 1116 to 1127 (QVQQQQSQTNQA).

This sequence belongs to the AAA ATPase family. In terms of assembly, interacts with PEX6; forming the PEX1-PEX6 AAA ATPase complex, which is composed of a heterohexamer formed by a trimer of PEX1-PEX6 dimers.

It is found in the cytoplasm. The protein resides in the cytosol. The protein localises to the peroxisome membrane. The catalysed reaction is ATP + H2O = ADP + phosphate + H(+). Component of the PEX1-PEX6 AAA ATPase complex, a protein dislocase complex that mediates the ATP-dependent extraction of the PEX5 receptor from peroxisomal membranes, an essential step for PEX5 recycling. Specifically recognizes PEX5 monoubiquitinated at 'Cys-6', and pulls it out of the peroxisome lumen through the PEX2-PEX10-PEX12 retrotranslocation channel. Extraction by the PEX1-PEX6 AAA ATPase complex is accompanied by unfolding of the TPR repeats and release of bound cargo from PEX5. Regulates autophagy and biogenesis of peroxisomes and Woronin bodies. Plays important roles in mycelial growth and development and stress response. Is also essential for conidiation and fatty acid utilization. Required for nematode predation via trap formation. This chain is Peroxisomal ATPase PEX1, found in Arthrobotrys oligospora (strain ATCC 24927 / CBS 115.81 / DSM 1491) (Nematode-trapping fungus).